Here is a 483-residue protein sequence, read N- to C-terminus: Probable glycine dehydrogenase (decarboxylating) subunit 2 (483 aa).

The residue at position 264 (Lys264) is an N6-(pyridoxal phosphate)lysine.

It belongs to the GcvP family. C-terminal subunit subfamily. In terms of assembly, the glycine cleavage system is composed of four proteins: P, T, L and H. In this organism, the P 'protein' is a heterodimer of two subunits. Pyridoxal 5'-phosphate serves as cofactor.

It carries out the reaction N(6)-[(R)-lipoyl]-L-lysyl-[glycine-cleavage complex H protein] + glycine + H(+) = N(6)-[(R)-S(8)-aminomethyldihydrolipoyl]-L-lysyl-[glycine-cleavage complex H protein] + CO2. The glycine cleavage system catalyzes the degradation of glycine. The P protein binds the alpha-amino group of glycine through its pyridoxal phosphate cofactor; CO(2) is released and the remaining methylamine moiety is then transferred to the lipoamide cofactor of the H protein. This Nitrosomonas eutropha (strain DSM 101675 / C91 / Nm57) protein is Probable glycine dehydrogenase (decarboxylating) subunit 2.